A 150-amino-acid chain; its full sequence is Urease accessory protein UreE (150 aa).

It belongs to the UreE family.

Its subcellular location is the cytoplasm. In terms of biological role, involved in urease metallocenter assembly. Binds nickel. Probably functions as a nickel donor during metallocenter assembly. This is Urease accessory protein UreE from Staphylococcus carnosus (strain TM300).